We begin with the raw amino-acid sequence, 291 residues long: MQRDRRYRYRLAPYNKYQLPPCEEQSKATLSTSENSLWPECNSLTLHNVSEVRGIPSCVGFTVLQEWPIPWDMILTDYEMFILKKYMSVCMCCATINVEVTQLLHGHERWLIHCHCQRPGSLQCMSAGMLLGRWFKMAVYGALINKRCFWYREVVNHLMPKEVMYVGSTFVRGRHLIYFKIMYDGHAWLALEKVSFGWSAFNYGILNNMLVLCCDYCKDLSEIRMRCCARRTRLLMLKVVQVIAENTVRPLKHSRHERYRQQLLKGLIMHHRAILFGDYNQRENPWAADGH.

It belongs to the adenoviridae E4 30 to 34 kDa protein family. As to quaternary structure, interacts with E1B-55k.

The protein resides in the host nucleus. The protein localises to the host cytoplasm. Plays a major role to prevent cellular inhibition of viral genome replication by nuclear bodies. Assembles an SCF-like E3 ubiquitin ligase complex based on the cellular proteins ELOB, ELOC, CUL5 and RBX1, in cooperation with viral E1B-55K. This viral RING-type ligase ubiquitinates cellular substrates prior to proteasomal degradation: p53/TP53, LIG4, MRE11-RAD50-NBS1 (MRN) complex, ITGA3, DAXX and BLM. In Homo sapiens (Human), this protein is Early E4 34 kDa protein.